A 141-amino-acid chain; its full sequence is Flagellar assembly factor FliW 1 (141 aa).

Belongs to the FliW family. Interacts with translational regulator CsrA and flagellin(s).

It is found in the cytoplasm. Acts as an anti-CsrA protein, binds CsrA and prevents it from repressing translation of its target genes, one of which is flagellin. Binds to flagellin and participates in the assembly of the flagellum. The polypeptide is Flagellar assembly factor FliW 1 (Desulfotalea psychrophila (strain LSv54 / DSM 12343)).